We begin with the raw amino-acid sequence, 119 residues long: uncharacterized protein (119 aa).

Residues 55–119 (LSTEPPTPPS…SRLPPRSWTN (65 aa)) form a disordered region. The span at 81–92 (LSYTRCHSTTYT) shows a compositional bias: polar residues.

This is an uncharacterized protein from Saccharomyces cerevisiae (strain ATCC 204508 / S288c) (Baker's yeast).